We begin with the raw amino-acid sequence, 460 residues long: Nucleosome assembly protein 1-like 2 (460 aa).

Composition is skewed to basic and acidic residues over residues 1 to 11 (MAESENRKELS) and 27 to 36 (LGEHLERGED). Disordered regions lie at residues 1–88 (MAES…ADRP) and 214–238 (EEEE…EDPK). A compositionally biased stretch (acidic residues) spans 214-236 (EEEEEEEEDDIEATGEENKEEED). Residues 346–352 (IKKKQKH) carry the Nuclear localization signal motif.

Belongs to the nucleosome assembly protein (NAP) family.

The protein localises to the nucleus. Acidic protein which may be involved in interactions with other proteins or DNA. The sequence is that of Nucleosome assembly protein 1-like 2 (NAP1L2) from Homo sapiens (Human).